The following is an 851-amino-acid chain: DNA mismatch repair protein MutS (851 aa).

An ATP-binding site is contributed by 614-621 (GPNMGGKS).

This sequence belongs to the DNA mismatch repair MutS family.

This protein is involved in the repair of mismatches in DNA. It is possible that it carries out the mismatch recognition step. This protein has a weak ATPase activity. The protein is DNA mismatch repair protein MutS of Serratia proteamaculans (strain 568).